Reading from the N-terminus, the 139-residue chain is NADPH-dependent 7-cyano-7-deazaguanine reductase (139 aa).

Catalysis depends on cysteine 34, which acts as the Thioimide intermediate. The active-site Proton donor is aspartate 41. Substrate-binding positions include 56 to 58 (VEL) and 75 to 76 (HE).

This sequence belongs to the GTP cyclohydrolase I family. QueF type 1 subfamily.

The protein localises to the cytoplasm. The enzyme catalyses 7-aminomethyl-7-carbaguanine + 2 NADP(+) = 7-cyano-7-deazaguanine + 2 NADPH + 3 H(+). It participates in tRNA modification; tRNA-queuosine biosynthesis. Catalyzes the NADPH-dependent reduction of 7-cyano-7-deazaguanine (preQ0) to 7-aminomethyl-7-deazaguanine (preQ1). This is NADPH-dependent 7-cyano-7-deazaguanine reductase from Nitrosospira multiformis (strain ATCC 25196 / NCIMB 11849 / C 71).